The sequence spans 317 residues: MPVQGSQRRLLGSLNSTPTATPKLGLAANQTGAWCLEVSIPDGLFLSLGLVSLVENVLVVAAIAKNRNLHSPMYCFICCLALSDLLVSGSNMLETAVILLLEAGALAARAAVVQQLDNVIDVITCSSMLSSLCFLGAIAVDRYISIFYALRYHSIVTLPRAQRVVAAIWVASVLFSTLFIAYYDHAAVLLCLVVFFLAMLVLMAVLYVHMLARACQHAQGIAQLHKRQRPAHQGFGLKGAATLTILLGIFFLCWGPFFLHLTLIVLCPQHPTCSCIFKNFNLFLALIICNAIIDPLIYAFRSQELRRTLKEVLLCSW.

Over 1–37 (MPVQGSQRRLLGSLNSTPTATPKLGLAANQTGAWCLE) the chain is Extracellular. N-linked (GlcNAc...) asparagine glycosylation is present at Asn-29. The chain crosses the membrane as a helical span at residues 38-63 (VSIPDGLFLSLGLVSLVENVLVVAAI). Over 64–72 (AKNRNLHSP) the chain is Cytoplasmic. Residues 73 to 93 (MYCFICCLALSDLLVSGSNML) traverse the membrane as a helical segment. At 94 to 118 (ETAVILLLEAGALAARAAVVQQLDN) the chain is on the extracellular side. Residues 119 to 140 (VIDVITCSSMLSSLCFLGAIAV) traverse the membrane as a helical segment. The Cytoplasmic segment spans residues 141–163 (DRYISIFYALRYHSIVTLPRAQR). Residues 164 to 183 (VVAAIWVASVLFSTLFIAYY) traverse the membrane as a helical segment. Residues 184 to 191 (DHAAVLLC) lie on the Extracellular side of the membrane. The helical transmembrane segment at 192–211 (LVVFFLAMLVLMAVLYVHML) threads the bilayer. The Cytoplasmic segment spans residues 212 to 240 (ARACQHAQGIAQLHKRQRPAHQGFGLKGA). The helical transmembrane segment at 241 to 266 (ATLTILLGIFFLCWGPFFLHLTLIVL) threads the bilayer. Residues 267–279 (CPQHPTCSCIFKN) are Extracellular-facing. The helical transmembrane segment at 280–300 (FNLFLALIICNAIIDPLIYAF) threads the bilayer. At 301-317 (RSQELRRTLKEVLLCSW) the chain is on the cytoplasmic side. A lipid anchor (S-palmitoyl cysteine) is attached at Cys-315.

The protein belongs to the G-protein coupled receptor 1 family. Interacts with MGRN1, but does not undergo MGRN1-mediated ubiquitination; this interaction competes with GNAS-binding and thus inhibits agonist-induced cAMP production. Interacts with OPN3; the interaction results in a decrease in MC1R-mediated cAMP signaling and ultimately a decrease in melanin production in melanocytes.

It is found in the cell membrane. In terms of biological role, receptor for MSH (alpha, beta and gamma) and ACTH. The activity of this receptor is mediated by G proteins which activate adenylate cyclase. Mediates melanogenesis, the production of eumelanin (black/brown) and phaeomelanin (red/yellow), via regulation of cAMP signaling in melanocytes. The polypeptide is Melanocyte-stimulating hormone receptor (MC1R) (Colobus guereza (Mantled guereza)).